The following is a 314-amino-acid chain: Probable cell division protein WhiA (314 aa).

A DNA-binding region (H-T-H motif) is located at residues 277–311 (TLKELGEKMPSGAISKSGINHRLRKLNQLAEGYQQ).

This sequence belongs to the WhiA family.

Involved in cell division and chromosome segregation. This Latilactobacillus sakei subsp. sakei (strain 23K) (Lactobacillus sakei subsp. sakei) protein is Probable cell division protein WhiA.